The following is a 211-amino-acid chain: Beta-crystallin B3 (211 aa).

At M1 the chain carries N-acetylmethionine. N-acetylalanine; in Beta-crystallin B3, N-terminally processed is present on A2. Residues 2–23 (AEQHGAPEQAAAGKSHGGLGGS) are N-terminal arm. 2 Beta/gamma crystallin 'Greek key' domains span residues 24 to 63 (YKVTVYELENFQGKRCELSAECPNLTDSLLEKVGSIQVES) and 64 to 108 (GPWL…RPLH). Positions 109–113 (IDGPD) are connecting peptide. Beta/gamma crystallin 'Greek key' domains lie at 114–155 (HKLH…RVIN) and 156–198 (GTWV…RRIR). Residues 200-211 (QKWHKRGCFLSS) form a C-terminal arm region.

It belongs to the beta/gamma-crystallin family. Homo/heterodimer, or complexes of higher-order. The structure of beta-crystallin oligomers seems to be stabilized through interactions between the N-terminal arms.

Functionally, crystallins are the dominant structural components of the vertebrate eye lens. This is Beta-crystallin B3 (Crybb3) from Mus musculus (Mouse).